The following is a 1272-amino-acid chain: Myosin-binding protein C, cardiac-type (1272 aa).

The segment at 95–147 (KEPEKSEPVAPAEASPAPAASELPAPPVESNQNPEVPPAETQPEEPVDPIGLF) is disordered. Low complexity predominate over residues 102-117 (PVAPAEASPAPAASEL). One can recognise an Ig-like C2-type 1 domain in the interval 137-252 (PEEPVDPIGL…NLIVNEAPVS (116 aa)). Ser-265 is modified (phosphoserine; by PKA and PKC). Thr-274 is modified (phosphothreonine; by PKA and PKC). Ser-300 carries the post-translational modification Phosphoserine; by PKA. Ig-like C2-type domains follow at residues 359–451 (KKST…VKEP), 452–542 (PILI…VQEK), 543–640 (KLEV…FVPR), and 644–763 (PKIH…ADIT). 2 consecutive Fibronectin type-III domains span residues 772 to 868 (PPEA…IAPP) and 870 to 965 (EPTH…VQEI). Residues 969-1057 (PKICVPRHLR…ENMTDTVAIT (89 aa)) form the Ig-like C2-type 6 domain. The region spanning 1066–1161 (PPQNIKLADV…TKNPAYIQKT (96 aa)) is the Fibronectin type-III 3 domain. Ser-1169 carries the post-translational modification Phosphoserine; by PKC. Positions 1179–1263 (PKFTHPLVNR…VNERGEAEIE (85 aa)) constitute an Ig-like C2-type 7 domain.

The protein belongs to the immunoglobulin superfamily. MyBP family. Substrate for phosphorylation by PKA and PKC. Reversible phosphorylation appears to modulate contraction. In terms of tissue distribution, expressed specifically in cardiac muscle among adult tissues, but is also expressed transiently in the skeletal muscle at early developmental stages. Isoform Type I is found in embryonic skeletal muscle and isoform Type II is found in both embryonic skeletal and cardiac muscle.

In terms of biological role, thick filament-associated protein located in the crossbridge region of vertebrate striated muscle A bands. In vitro it binds MHC, F-actin and native thin filaments, and modifies the activity of actin-activated myosin ATPase. It may modulate muscle contraction or may play a more structural role. May be involved in the early phase of myofibrillogenesis. The polypeptide is Myosin-binding protein C, cardiac-type (MYBPC3) (Gallus gallus (Chicken)).